Here is a 360-residue protein sequence, read N- to C-terminus: Magnesium transporter NIPA2 (360 aa).

Over 1–9 the chain is Extracellular; that stretch reads MSQGRGKYD. A helical transmembrane segment spans residues 10–30; that stretch reads FYIGLGLAMSSSIFIGGSFIL. Over 31–56 the chain is Cytoplasmic; sequence KKKGLLRLARKGSMRAGQGGHAYLKE. Residues 57–77 form a helical membrane-spanning segment; sequence WLWWAGLLSMGAGEVANFAAY. A topological domain (extracellular) is located at residue Ala-78. The helical transmembrane segment at 79–99 threads the bilayer; sequence FAPATLVTPLGALSVLVSAIL. At 100–107 the chain is on the cytoplasmic side; sequence SSYFLNER. A helical transmembrane segment spans residues 108-128; it reads LNLHGKIGCLLSILGSTVMVI. Over 129–149 the chain is Extracellular; it reads HAPKEEEIETLNEMSHKLGDP. Residues 150–170 traverse the membrane as a helical segment; the sequence is GFVVFATLVVIVALILIFVVG. The Cytoplasmic portion of the chain corresponds to 171 to 175; the sequence is PRHGQ. A helical transmembrane segment spans residues 176–196; that stretch reads TNILVYITICSVIGAFSVSCV. Residues 197-215 are Extracellular-facing; sequence KGLGIAIKELFAGKPVLRH. The helical transmembrane segment at 216–236 threads the bilayer; that stretch reads PLAWILLLSLIVCVSTQINYL. Residues 237-246 are Cytoplasmic-facing; the sequence is NRALDIFNTS. The chain crosses the membrane as a helical span at residues 247-267; that stretch reads IVTPIYYVFFTTSVLTCSAIL. Over 268–278 the chain is Extracellular; it reads FKEWQDMPVDD. The chain crosses the membrane as a helical span at residues 279–299; the sequence is VIGTLSGFFTIIVGIFLLHAF. At 300 to 360 the chain is on the cytoplasmic side; sequence KDVSFSLASL…SRRNGNLTAF (61 aa).

It belongs to the NIPA family. In terms of tissue distribution, widely expressed.

Its subcellular location is the cell membrane. The protein resides in the early endosome. It catalyses the reaction Mg(2+)(in) = Mg(2+)(out). In terms of biological role, acts as a selective Mg(2+) transporter. The sequence is that of Magnesium transporter NIPA2 (NIPA2) from Homo sapiens (Human).